A 435-amino-acid chain; its full sequence is NADH-quinone oxidoreductase subunit D (435 aa).

It belongs to the complex I 49 kDa subunit family. In terms of assembly, NDH-1 is composed of 14 different subunits. Subunits NuoB, C, D, E, F, and G constitute the peripheral sector of the complex.

It is found in the cell inner membrane. It catalyses the reaction a quinone + NADH + 5 H(+)(in) = a quinol + NAD(+) + 4 H(+)(out). In terms of biological role, NDH-1 shuttles electrons from NADH, via FMN and iron-sulfur (Fe-S) centers, to quinones in the respiratory chain. The immediate electron acceptor for the enzyme in this species is believed to be ubiquinone. Couples the redox reaction to proton translocation (for every two electrons transferred, four hydrogen ions are translocated across the cytoplasmic membrane), and thus conserves the redox energy in a proton gradient. This chain is NADH-quinone oxidoreductase subunit D, found in Xanthomonas axonopodis pv. citri (strain 306).